A 685-amino-acid chain; its full sequence is Nucleolar protein 4 (685 aa).

Positions 1–21 are disordered; sequence MEETIENVEVPSSNVSKQNDD. Positions 26–103 constitute an RRM 1 domain; the sequence is KTLFVRSIPQ…HILRVDIAKR (78 aa). The segment covering 106–123 has biased composition (basic and acidic residues); sequence RSKKTSEVVEKSTPESSE. A disordered region spans residues 106–142; it reads RSKKTSEVVEKSTPESSEKITGQNNEDEDDADGEDSM. A compositionally biased stretch (acidic residues) spans 130 to 140; the sequence is NEDEDDADGED. The region spanning 147–225 is the RRM 2 domain; it reads PKLIIRNMPW…RKVAVDFAVQ (79 aa). Residues 231 to 242 show a composition bias toward basic and acidic residues; the sequence is DYKKAQPEMNDK. The interval 231–285 is disordered; the sequence is DYKKAQPEMNDKDDNESGNEDAEENHDDEEDENEEEDRQVDQASKNKESKRKAQN. Acidic residues predominate over residues 243 to 268; it reads DDNESGNEDAEENHDDEEDENEEEDR. S247 carries the post-translational modification Phosphoserine. RRM domains follow at residues 290-383 and 462-612; these read FSVF…PTLV and TRLA…FAIE. A Phosphothreonine modification is found at T379. Over residues 622 to 631 the composition is skewed to basic residues; the sequence is EQLKQARTKR. The segment at 622–685 is disordered; it reads EQLKQARTKR…FKRKRKHAKK (64 aa). Over residues 645–672 the composition is skewed to basic and acidic residues; it reads SENKKPKKEEATTPTNPDDKKMGDDIKR. Residues 674–685 show a composition bias toward basic residues; sequence IGFKRKRKHAKK.

Interacts with NOP1.

The protein resides in the nucleus. The protein localises to the nucleolus. Functionally, required for 60S ribosomal subunit synthesis. Probably involved in the processing of 27S rRNA to produce mature 25S rRNA. The polypeptide is Nucleolar protein 4 (NOP4) (Saccharomyces cerevisiae (strain ATCC 204508 / S288c) (Baker's yeast)).